A 523-amino-acid chain; its full sequence is Frizzled-2 (523 aa).

The FZ domain occupies 1-120; sequence PDHGFCQPIS…HGAEQICVGQ (120 aa). The Extracellular portion of the chain corresponds to 1–205; that stretch reads PDHGFCQPIS…EDEIRFARVW (205 aa). 5 disulfide bridges follow: C6–C67, C14–C60, C51–C88, C77–C117, and C81–C105. N-linked (GlcNAc...) asparagine glycosylation occurs at N20. Residue N121 is glycosylated (N-linked (GlcNAc...) asparagine). The helical transmembrane segment at 206-226 threads the bilayer; sequence ILVWSVLCCASTFFTVTTYLV. The Cytoplasmic segment spans residues 227-237; it reads DMQRFRYPERP. A helical membrane pass occupies residues 238 to 258; it reads IIFLSGCYTMVSVAYIAGFVL. At 259 to 285 the chain is on the extracellular side; the sequence is EERVVCNERFQEDGYRTVVQGTKKEGC. A helical membrane pass occupies residues 286–306; it reads TILFMMLYFFSMASSIWWVIL. Over 307–328 the chain is Cytoplasmic; that stretch reads SLTWFLAAGMKWGHEAIEANSQ. Residues 329-349 traverse the membrane as a helical segment; sequence YFHLAAWAVPAVKTITILAMG. Topologically, residues 350–372 are extracellular; the sequence is QIDGDLLSGVCFVGLNGIDPLRG. A helical transmembrane segment spans residues 373–393; it reads FVLAPLFVYLFIGTSFLLAGF. Residues 394–419 are Cytoplasmic-facing; sequence VSLFRIRTIMKHGGTKTEKLERLMVR. Residues 420–440 traverse the membrane as a helical segment; that stretch reads IGVFSVLYTVPATIVIACYFY. Residues 441–477 are Extracellular-facing; the sequence is EQAFRQHWERSWISQHCKSLAIPCPLHFTPRMTPDFT. The chain crosses the membrane as a helical span at residues 478 to 498; that stretch reads VYMIKYLMTLIVGITSGFWIF. Residues 499 to 523 are Cytoplasmic-facing; it reads SGKTLHSWRKFYTRLTNSRQGETTV. The short motif at 501–506 is the Lys-Thr-X-X-X-Trp motif, mediates interaction with the PDZ domain of Dvl family members element; that stretch reads KTLHSW. The PDZ-binding signature appears at 521 to 523; that stretch reads TTV.

The protein belongs to the G-protein coupled receptor Fz/Smo family. As to expression, expressed in the developing head and limbs. Expressed broadly in cranial ectoderm. Also expressed in the developing somites (dermomyotome) and in other cranial placodes, including the olfactory, lens, and otic placodes (rostral rim of the vesicle).

Its subcellular location is the membrane. The protein resides in the cell membrane. Functionally, receptor for Wnt proteins. Most of frizzled receptors are coupled to the beta-catenin canonical signaling pathway, which leads to the activation of disheveled proteins, inhibition of GSK-3 kinase, nuclear accumulation of beta-catenin and activation of Wnt target genes. A second signaling pathway involving PKC and calcium fluxes has been seen for some family members, but it is not yet clear if it represents a distinct pathway or if it can be integrated in the canonical pathway, as PKC seems to be required for Wnt-mediated inactivation of GSK-3 kinase. Both pathways seem to involve interactions with G-proteins. May be involved in transduction and intercellular transmission of polarity information during tissue morphogenesis and/or in differentiated tissues. The sequence is that of Frizzled-2 (FZD2) from Gallus gallus (Chicken).